A 439-amino-acid polypeptide reads, in one-letter code: ATP-dependent protease ATPase subunit HslU (439 aa).

ATP is bound by residues isoleucine 17, 59 to 64, aspartate 251, glutamate 317, and arginine 389; that span reads GVGKTE.

Belongs to the ClpX chaperone family. HslU subfamily. As to quaternary structure, a double ring-shaped homohexamer of HslV is capped on each side by a ring-shaped HslU homohexamer. The assembly of the HslU/HslV complex is dependent on binding of ATP.

The protein resides in the cytoplasm. Functionally, ATPase subunit of a proteasome-like degradation complex; this subunit has chaperone activity. The binding of ATP and its subsequent hydrolysis by HslU are essential for unfolding of protein substrates subsequently hydrolyzed by HslV. HslU recognizes the N-terminal part of its protein substrates and unfolds these before they are guided to HslV for hydrolysis. The chain is ATP-dependent protease ATPase subunit HslU from Campylobacter jejuni subsp. doylei (strain ATCC BAA-1458 / RM4099 / 269.97).